We begin with the raw amino-acid sequence, 296 residues long: GTPase Era (296 aa).

The Era-type G domain occupies 7–174 (RTGFVAVVGR…LDEIAARLPE (168 aa)). The G1 stretch occupies residues 15 to 22 (GRPNVGKS). 15 to 22 (GRPNVGKS) is a binding site for GTP. The interval 41 to 45 (QTTRH) is G2. A G3 region spans residues 62–65 (DTPG). GTP-binding positions include 62–66 (DTPGF) and 123–126 (SKID). Residues 123-126 (SKID) are G4. The tract at residues 153-155 (VSA) is G5. A KH type-2 domain is found at 205–281 (VGDELPYGCT…HLEVYIKVRK (77 aa)).

It belongs to the TRAFAC class TrmE-Era-EngA-EngB-Septin-like GTPase superfamily. Era GTPase family. Monomer.

The protein resides in the cytoplasm. It is found in the cell inner membrane. Functionally, an essential GTPase that binds both GDP and GTP, with rapid nucleotide exchange. Plays a role in 16S rRNA processing and 30S ribosomal subunit biogenesis and possibly also in cell cycle regulation and energy metabolism. The protein is GTPase Era of Bordetella petrii (strain ATCC BAA-461 / DSM 12804 / CCUG 43448).